Consider the following 176-residue polypeptide: Shikimate kinase (176 aa).

Position 14–19 (14–19 (GAGKST)) interacts with ATP. Mg(2+) is bound at residue Ser-18. Positions 36, 60, and 83 each coordinate substrate. ATP is bound at residue Arg-121. A substrate-binding site is contributed by Arg-140.

This sequence belongs to the shikimate kinase family. In terms of assembly, monomer. It depends on Mg(2+) as a cofactor.

It is found in the cytoplasm. It catalyses the reaction shikimate + ATP = 3-phosphoshikimate + ADP + H(+). It functions in the pathway metabolic intermediate biosynthesis; chorismate biosynthesis; chorismate from D-erythrose 4-phosphate and phosphoenolpyruvate: step 5/7. Functionally, catalyzes the specific phosphorylation of the 3-hydroxyl group of shikimic acid using ATP as a cosubstrate. The protein is Shikimate kinase of Francisella tularensis subsp. tularensis (strain FSC 198).